Reading from the N-terminus, the 385-residue chain is Cellulase CelDZ1 (385 aa).

A helical transmembrane segment spans residues 6 to 26 (INKWYFFVGMLVIFAVIISLI). Substrate-binding positions include histidine 87, 91-92 (WF), tyrosine 118, and histidine 153. The active-site Proton donor is glutamate 192. Tyrosine 261 is a binding site for substrate. The active-site Nucleophile is glutamate 294. Residues 300–301 (AS), tryptophan 328, and 333–335 (KNE) contribute to the substrate site.

Belongs to the glycosyl hydrolase 5 (cellulase A) family. Monomer.

The protein localises to the cell membrane. It catalyses the reaction Endohydrolysis of (1-&gt;4)-beta-D-glucosidic linkages in cellulose, lichenin and cereal beta-D-glucans.. Its activity is regulated as follows. Activity is enhanced by 1mM Mn(2+), but is not affected by 1mM Ca(2+), Mg(2+), Zn(2+), K(+), Na(+) or Li(+). Activity is not inhibited by EDTA (in vitro). In terms of biological role, thermostable endoglucanase that has high activity with soluble polymeric substrates containing beta-1,4-glycosidic bonds, such as carboxymethyl cellulose (CMC) and barley beta-D-glucan (in vitro). Has no activity with cellobiose and filter paper. Has no activity with substrates containing beta-1,3-linked glycans, such as laminarin. Likewise, lacks activity with xylan, galactomannan and pectin. The polypeptide is Cellulase CelDZ1 (Thermoanaerobacterium sp).